A 210-amino-acid chain; its full sequence is Putative Dihydrofolate reductase (210 aa).

The DHFR domain occupies 4–184 (TLYCVVAVDT…IFYMFETYIK (181 aa)).

It belongs to the dihydrofolate reductase family.

It carries out the reaction (6S)-5,6,7,8-tetrahydrofolate + NADP(+) = 7,8-dihydrofolate + NADPH + H(+). This is Putative Dihydrofolate reductase (ORF2) from Human herpesvirus 8 type P (isolate GK18) (HHV-8).